The primary structure comprises 965 residues: Transmembrane channel-like protein 5 (965 aa).

2 stretches are compositionally biased toward polar residues: residues 1 to 10 and 20 to 31; these read MSSFHKNSSY and SGSQNHTQNYLR. Positions 1–235 are disordered; that stretch reads MSSFHKNSSY…GAEEGDVYSP (235 aa). At 1-417 the chain is on the extracellular side; sequence MSSFHKNSSY…YFSFLRWLLK (417 aa). The segment covering 61-70 has biased composition (basic and acidic residues); it reads TNPDYHHSLA. Residues 166 to 181 show a composition bias toward polar residues; sequence QGNSYHSGPRSHSNLP. A Phosphoserine modification is found at serine 248. A helical transmembrane segment spans residues 418-438; it reads FNIFSFVMNFSFIIIPQFTVG. Residues 439–444 are Cytoplasmic-facing; the sequence is EKNTLQ. A helical transmembrane segment spans residues 445-467; sequence FTGLEFFTGAGYFRETVMYYGFY. At 468–484 the chain is on the extracellular side; the sequence is TNSTIRHRMGGASYNMQ. A helical transmembrane segment spans residues 485 to 505; sequence LAYIFTIGACLVICFFSLLFS. The Cytoplasmic segment spans residues 506 to 578; it reads MAKYFRNNFI…NQKLTRFSVH (73 aa). A helical transmembrane segment spans residues 579–599; it reads VAAWLVSTGITAACCVAVYYL. Topologically, residues 600–613 are extracellular; it reads AEYNSEFLKTHKNP. A helical transmembrane segment spans residues 614–634; it reads GAVLLLPFVVSCINLAVPRFY. The Cytoplasmic portion of the chain corresponds to 635–657; sequence SMFRLVERYEIPRQEVYVLLIRN. The helical transmembrane segment at 658-678 threads the bilayer; sequence IFLKISIVGILCYYWLNIVAL. The Extracellular segment spans residues 679–691; the sequence is SGEECWETLIGQD. The chain crosses the membrane as a helical span at residues 692-712; the sequence is IYRLLLMDFVFSLADSLLGEF. At 713–747 the chain is on the cytoplasmic side; it reads LRRLIGMKFITSLSLQEFDIARNVLELIYAQTLAW. The helical transmembrane segment at 748-768 threads the bilayer; that stretch reads LGIFFCPLLPFIQMITLFIMF. The Extracellular segment spans residues 769-794; it reads YVKNVSLMMNFQPPSKAWRASQMITF. Residues 795-815 form a helical membrane-spanning segment; that stretch reads FIFLLFFPSFTGVLCTLAITI. Residues 816-859 are Cytoplasmic-facing; the sequence is WRLKPSADCGPFRGLPSFIQSIYSWIDTLSHRPGYLWVVWIYQN. Residues 860 to 880 form a helical membrane-spanning segment; it reads LIGSVHFFFILTLIVLIITYL. Residues 881-965 are Extracellular-facing; that stretch reads YWQITEGRKV…RSMQEENAIA (85 aa).

Belongs to the TMC family.

It is found in the membrane. In terms of biological role, probable component of an ion channel. Molecular function hasn't been characterized yet. The polypeptide is Transmembrane channel-like protein 5 (Rattus norvegicus (Rat)).